A 281-amino-acid polypeptide reads, in one-letter code: Mad-like protein 1 (281 aa).

Low complexity predominate over residues 71 to 80 (SCASNASTSS). Residues 71–105 (SCASNASTSSQPYCSSPPARKSSKHSRTAHNELEK) form a disordered region. Residues 95–108 (HSRTAHNELEKTRR) form a basic motif region. In terms of domain architecture, bHLH spans 95–147 (HSRTAHNELEKTRRANLRGCLETLKMLVPCVSDATRNTTLALLTRARDHIIEL). Residues 109–147 (ANLRGCLETLKMLVPCVSDATRNTTLALLTRARDHIIEL) are helix-loop-helix motif. The stretch at 144–185 (IIELQDSNAAQMKKLNDLRDEQDELVAELAQLQADEEVAQAT) forms a coiled coil. Residues 189 to 213 (CQTLSQSRPESRASSFTSTSSRDSP) are disordered. Positions 200–212 (RASSFTSTSSRDS) are enriched in low complexity.

In terms of assembly, forms heterodimer with mxl-1 in the presence and absence of DNA. In terms of processing, ubiquitinated. In terms of tissue distribution, expressed in intestinal cells in adults. Expressed in D-type motor neuron cell bodies.

It localises to the nucleus. In terms of biological role, transcriptional regulator which binds to the E box motif 5'-CACGTG-3', when in a heterodimeric complex with mxl-1. Involved in the control of lifespan in response to dietary restriction, the decline in protein homeostasis associated with normal aging, germline signaling and may overlap with the insulin-like signaling pathway. Plays a role in autophagy. Involved in promoting infection by the microsporidian pathogen N.parisii, possibly together with transcription factors pha-4 and zip-10. In response to neuronal injury, mdl-1 is targeted by sdz-33 for ubiquitin-mediated degradation, probably thereby reducing levels of mdl-1-mxl-1 heterodimers, allowing free mxl-1 to form complexes with tdpt-1 and thus inhibiting tdpt-1-dependent sumoylation of ets-4. This is Mad-like protein 1 from Caenorhabditis elegans.